The sequence spans 1111 residues: Receptor-type guanylate cyclase gcy-14 (1111 aa).

A signal peptide spans 1–14; sequence MCLFLLLFPYLASG. The Extracellular segment spans residues 15–473; the sequence is QFLQTVKVGL…ECPPDFVKEY (459 aa). Residues asparagine 65, asparagine 130, asparagine 318, asparagine 340, asparagine 365, and asparagine 379 are each glycosylated (N-linked (GlcNAc...) asparagine). A helical membrane pass occupies residues 474–494; it reads LVYTIIAAVIVVLALLAGCAG. One can recognise a Protein kinase domain in the interval 482–817; the sequence is VIVVLALLAG…KSNLMDHVFN (336 aa). ATP-binding positions include 488–496 and lysine 545; that span reads LLAGCAGLL. Topologically, residues 495 to 1111 are cytoplasmic; sequence LLYTMQMKRK…DFNNGNECVS (617 aa). One can recognise a Guanylate cyclase domain in the interval 875-1005; sequence TIFFSDVVQF…DAVNTASRME (131 aa). A disordered region spans residues 1061-1082; the sequence is SAQAPREKTPEPPRRQSVRSIS. Positions 1065-1074 are enriched in basic and acidic residues; it reads PREKTPEPPR.

Belongs to the adenylyl cyclase class-4/guanylyl cyclase family. Homodimer. As to expression, expressed asymmetrically in ASEL sensory neuron.

The protein localises to the cell membrane. It localises to the cell projection. Its subcellular location is the cilium. The enzyme catalyses GTP = 3',5'-cyclic GMP + diphosphate. Its function is as follows. Guanylate cyclase involved in the production of the second messenger cGMP. Regulates chemotaxis responses toward Na(1+) and Li(1+) salt ions and alkaline pH in ASE left (ASEL) sensory neuron. Directly senses environmental alkalinity in ASEL neuron which probably leads to the activation of cGMP-gated cation channel tax2/tax4. The polypeptide is Receptor-type guanylate cyclase gcy-14 (Caenorhabditis elegans).